Here is a 226-residue protein sequence, read N- to C-terminus: Putative ABC transporter ATP-binding protein BH02760 (226 aa).

Residues Ile-4–Ile-222 form the ABC transporter domain. Gly-35–Ser-42 provides a ligand contact to ATP.

This sequence belongs to the ABC transporter superfamily.

The protein resides in the cell inner membrane. Probably part of an ABC transporter complex. Responsible for energy coupling to the transport system. The polypeptide is Putative ABC transporter ATP-binding protein BH02760 (Bartonella henselae (strain ATCC 49882 / DSM 28221 / CCUG 30454 / Houston 1) (Rochalimaea henselae)).